The chain runs to 421 residues: Outer capsid protein P8 (421 aa).

This sequence belongs to the phytoreovirus outer capsid protein P8 family. In terms of assembly, homotrimer. Homomultimer. Interacts with host peroxisomal glycolate oxidase (GOX). This interaction mediates its relocation to virus factories peripheral to host peroxisomes.

Its subcellular location is the virion. It localises to the host cytoplasm. Its function is as follows. Capsid protein which self-assembles to form the outer icosahedral capsid with a T=13 symmetry, about 70 nm in diameter and consisting of 780 molecules capsid proteins. The protein is Outer capsid protein P8 (S8) of Rice dwarf virus (isolate S) (RDV).